The sequence spans 210 residues: Small ribosomal subunit protein uS7 (210 aa).

It belongs to the universal ribosomal protein uS7 family. Component of the small ribosomal subunit. Part of the small subunit (SSU) processome, composed of more than 70 proteins and the RNA chaperone small nucleolar RNA (snoRNA) U3.

It localises to the cytoplasm. It is found in the nucleus. The protein localises to the nucleolus. Component of the small ribosomal subunit. The ribosome is a large ribonucleoprotein complex responsible for the synthesis of proteins in the cell. Part of the small subunit (SSU) processome, first precursor of the small eukaryotic ribosomal subunit. During the assembly of the SSU processome in the nucleolus, many ribosome biogenesis factors, an RNA chaperone and ribosomal proteins associate with the nascent pre-rRNA and work in concert to generate RNA folding, modifications, rearrangements and cleavage as well as targeted degradation of pre-ribosomal RNA by the RNA exosome. This Caenorhabditis elegans protein is Small ribosomal subunit protein uS7 (rps-5).